The sequence spans 177 residues: MLDTIVLGGGCFWCVESVFLSVVGVKEVESGYAGGNTKNPDYRSICSGKTGHAEVVKVSFDTEKISLSQILEIFFATHDPTTPNRQGNDVGTQYRSVVMCHSQEQKDIAQEVISTLGNNGTFENPIVTEVVDLKDYYRAEEYHQNYFNKNPYQPYCVFSIPPKLQKLKKYFPDQVSA.

The active site involves C11.

This sequence belongs to the MsrA Met sulfoxide reductase family.

The enzyme catalyses L-methionyl-[protein] + [thioredoxin]-disulfide + H2O = L-methionyl-(S)-S-oxide-[protein] + [thioredoxin]-dithiol. It carries out the reaction [thioredoxin]-disulfide + L-methionine + H2O = L-methionine (S)-S-oxide + [thioredoxin]-dithiol. In terms of biological role, has an important function as a repair enzyme for proteins that have been inactivated by oxidation. Catalyzes the reversible oxidation-reduction of methionine sulfoxide in proteins to methionine. The protein is Peptide methionine sulfoxide reductase MsrA of Trichodesmium erythraeum (strain IMS101).